A 214-amino-acid polypeptide reads, in one-letter code: pH-sensitive calcium channel (214 aa).

The Cytoplasmic portion of the chain corresponds to 1-15 (MQATVHESKQSIMQR). Residues 16 to 37 (ILTVFVFTLLIATVGLFIGQFV) traverse the membrane as a helical segment. The Extracellular segment spans residues 38-44 (PVALMLP). The chain crosses the membrane as a helical span at residues 45–59 (LSILEVAMIILAFWM). Residues 60–66 (RRRKAVG) are Cytoplasmic-facing. Residues 67–86 (YAFVYTFAFVSGITLFPIVS) form a helical membrane-spanning segment. Residues 87–95 (HYASIAGAY) are Extracellular-facing. The chain crosses the membrane as a helical span at residues 96-117 (VVLEAFGSTFVIFAVLGTIGAK). Topologically, residues 118–122 (MKKDL) are cytoplasmic. Residues 123–146 (SFLWSFLLVAVLALAVVGIFNIFS) form a helical membrane-spanning segment. The Extracellular segment spans residues 147 to 151 (PLNSA). Residues 152-175 (AMMAYSVIGTIVFSLYILYDLNQI) traverse the membrane as a helical segment. Topologically, residues 176 to 185 (KHRHITEDLI) are cytoplasmic. The chain crosses the membrane as a helical span at residues 186–207 (PVMALSLYLDFINLFINLLRFF). Topologically, residues 208-214 (GILSSDD) are extracellular.

The protein belongs to the BI1 family. Monomer.

The protein localises to the cell membrane. The catalysed reaction is Ca(2+)(in) = Ca(2+)(out). Its activity is regulated as follows. The calcium-release activity is mediated by two factors: pH and transmembrane ion gradient. It was proposed, based on an MD simulation, that the conserved aspartyl dyad (Asp-171-Asp-195) regulates Ca(2+) binding, pH sensing, and the channel pore opening and closing, and that protonation of Asp-171 probably weakens its interaction with Arg-60, facilitating the opening of the channel. Another study using nanodiscs suggests that Asp-171 is not a pH sensor regulating the pore dynamics; instead, it is only involved in the gating of calcium ions. When crystallized in detergents at different pH conditions, the transition between open and closed conformations is regulated by pH. Ca(2+) binding is inhibited by Na(+), K(+), Li(+), Yb(3+) and Lu(3+), but not by Mg(2+) and Mn(2+). Calcium channel that probably plays a role in the regulation of calcium homeostasis. Uptakes calcium ions and mediates calcium flux in proteoliposomes in a pH-dependent manner. When expressed in E.coli in the presence of high extracellular calcium concentrations, shows calcium-leak activity, increasing intracellular calcium concentration. It can also mediate Ca(2+) flux from the endoplamic reticulum (ER) when expressed in permeabilized mammalian cells. Calcium transport activity is also detected in ER-like lipid vesicles. This Bacillus subtilis (strain 168) protein is pH-sensitive calcium channel.